A 481-amino-acid chain; its full sequence is Protein nucleotidyltransferase YdiU (481 aa).

ATP is bound by residues Gly-85, Gly-87, Arg-88, Lys-108, Asp-120, Gly-121, Arg-172, and Arg-179. Asp-248 functions as the Proton acceptor in the catalytic mechanism. Mg(2+) is bound by residues Asn-249 and Asp-258. An ATP-binding site is contributed by Asp-258.

The protein belongs to the SELO family. The cofactor is Mg(2+). Mn(2+) is required as a cofactor.

The enzyme catalyses L-seryl-[protein] + ATP = 3-O-(5'-adenylyl)-L-seryl-[protein] + diphosphate. It carries out the reaction L-threonyl-[protein] + ATP = 3-O-(5'-adenylyl)-L-threonyl-[protein] + diphosphate. It catalyses the reaction L-tyrosyl-[protein] + ATP = O-(5'-adenylyl)-L-tyrosyl-[protein] + diphosphate. The catalysed reaction is L-histidyl-[protein] + UTP = N(tele)-(5'-uridylyl)-L-histidyl-[protein] + diphosphate. The enzyme catalyses L-seryl-[protein] + UTP = O-(5'-uridylyl)-L-seryl-[protein] + diphosphate. It carries out the reaction L-tyrosyl-[protein] + UTP = O-(5'-uridylyl)-L-tyrosyl-[protein] + diphosphate. In terms of biological role, nucleotidyltransferase involved in the post-translational modification of proteins. It can catalyze the addition of adenosine monophosphate (AMP) or uridine monophosphate (UMP) to a protein, resulting in modifications known as AMPylation and UMPylation. The sequence is that of Protein nucleotidyltransferase YdiU from Cereibacter sphaeroides (strain ATCC 17029 / ATH 2.4.9) (Rhodobacter sphaeroides).